Reading from the N-terminus, the 227-residue chain is Phosphoribosylformylglycinamidine synthase subunit PurQ (227 aa).

Residues 2 to 226 form the Glutamine amidotransferase type-1 domain; that stretch reads KFAVIQFPGS…VKAWKEEQVN (225 aa). Cysteine 86 functions as the Nucleophile in the catalytic mechanism. Residues histidine 195 and glutamate 197 contribute to the active site.

In terms of assembly, part of the FGAM synthase complex composed of 1 PurL, 1 PurQ and 2 PurS subunits.

It localises to the cytoplasm. The enzyme catalyses N(2)-formyl-N(1)-(5-phospho-beta-D-ribosyl)glycinamide + L-glutamine + ATP + H2O = 2-formamido-N(1)-(5-O-phospho-beta-D-ribosyl)acetamidine + L-glutamate + ADP + phosphate + H(+). It carries out the reaction L-glutamine + H2O = L-glutamate + NH4(+). It participates in purine metabolism; IMP biosynthesis via de novo pathway; 5-amino-1-(5-phospho-D-ribosyl)imidazole from N(2)-formyl-N(1)-(5-phospho-D-ribosyl)glycinamide: step 1/2. In terms of biological role, part of the phosphoribosylformylglycinamidine synthase complex involved in the purines biosynthetic pathway. Catalyzes the ATP-dependent conversion of formylglycinamide ribonucleotide (FGAR) and glutamine to yield formylglycinamidine ribonucleotide (FGAM) and glutamate. The FGAM synthase complex is composed of three subunits. PurQ produces an ammonia molecule by converting glutamine to glutamate. PurL transfers the ammonia molecule to FGAR to form FGAM in an ATP-dependent manner. PurS interacts with PurQ and PurL and is thought to assist in the transfer of the ammonia molecule from PurQ to PurL. In Listeria monocytogenes serovar 1/2a (strain ATCC BAA-679 / EGD-e), this protein is Phosphoribosylformylglycinamidine synthase subunit PurQ.